The following is a 220-amino-acid chain: Urease accessory protein UreG (220 aa).

Residue 18–25 (GPVGSGKT) coordinates GTP.

Belongs to the SIMIBI class G3E GTPase family. UreG subfamily. As to quaternary structure, homodimer. UreD, UreF and UreG form a complex that acts as a GTP-hydrolysis-dependent molecular chaperone, activating the urease apoprotein by helping to assemble the nickel containing metallocenter of UreC. The UreE protein probably delivers the nickel.

The protein localises to the cytoplasm. Functionally, facilitates the functional incorporation of the urease nickel metallocenter. This process requires GTP hydrolysis, probably effectuated by UreG. This Yersinia pestis protein is Urease accessory protein UreG.